Reading from the N-terminus, the 491-residue chain is ADP-specific phosphofructokinase (491 aa).

An ADPK domain is found at 4–486 (EEWEQRHAEA…FVAMLAKIKQ (483 aa)). 3 residues coordinate Mg(2+): Glu281, Glu312, and Asp470. Asp470 (proton acceptor) is an active-site residue.

This sequence belongs to the carbohydrate kinase PfkC family. Requires Mg(2+) as cofactor.

Its subcellular location is the cytoplasm. It catalyses the reaction beta-D-fructose 6-phosphate + ADP = beta-D-fructose 1,6-bisphosphate + AMP + H(+). It functions in the pathway carbohydrate degradation; glycolysis. Its function is as follows. Catalyzes the phosphorylation of fructose 6-phosphate to fructose 1,6-bisphosphate using ADP as the phosphate donor. The polypeptide is ADP-specific phosphofructokinase (Methanosarcina acetivorans (strain ATCC 35395 / DSM 2834 / JCM 12185 / C2A)).